A 63-amino-acid polypeptide reads, in one-letter code: Hirudin-P6 (63 aa).

The interaction with thrombin active site stretch occupies residues Met1–Tyr3. Cystine bridges form between Cys6–Cys14, Cys16–Cys28, and Cys22–Cys37. Residues Lys35–Asp55 show a composition bias toward basic and acidic residues. A disordered region spans residues Lys35 to Ser63. Residue Thr43 is glycosylated (O-linked (GalNAc...) threonine). The interaction with fibrinogen-binding exosite of thrombin stretch occupies residues Asp53–Ser63. A Sulfotyrosine modification is found at Tyr61.

Belongs to the protease inhibitor I14 (hirudin) family. Post-translationally, O-linked glycan consists of Fuc-Gal-GalNAc trisaccharide.

It localises to the secreted. Functionally, hirudin is a potent thrombin-specific protease inhibitor. It forms a stable non-covalent complex with alpha-thrombin, thereby abolishing its ability to cleave fibrinogen. In Hirudinaria manillensis (Asian medical leech), this protein is Hirudin-P6.